The following is a 475-amino-acid chain: MIQYSSKFNNAKVLVLGDVMLDRYWFGATNRISPEAPVPVVKVQGIEERAGGAANVAMNIASLSVPVALHGLIGQDDAGRALDKLLNSHNIQNHCVALDSHPTITKLRILSRHQQLLRLDFEEGFHHVASDSLLAKLEQEITAYGALILSDYGKGTLESVQQMIQVARKAGVPTLIDPKGTDFERYRGATLLTPNMSEFEAVVGHCKDDDEIVEKGLKLIADFELTALLVTRSEKGMTLLRPNQAPFHLPTQAKEVYDVTGAGDTVISVLATAIADGRPYEEACYLANAAAGVVVGKLGTSTVTPTELENAIHHREETGFGILAEDELKRAVEQAKQRGEKIVMTNGCFDILHPGHVSYLENARKLGDRLIVAVNTDESVKRLKGESRPINDLNARMAVLAGLASVDWVVPFAEDTPQRLIGEILPNLLVKGGDYKPEEIAGSQEVWANGGEVKVLNFENGCSTTNVIKKIQASK.

Positions 1-318 (MIQYSSKFNN…ENAIHHREET (318 aa)) are ribokinase. 195-198 (NMSE) provides a ligand contact to ATP. Asp264 is an active-site residue. A cytidylyltransferase region spans residues 344-475 (MTNGCFDILH…NVIKKIQASK (132 aa)).

In the N-terminal section; belongs to the carbohydrate kinase PfkB family. It in the C-terminal section; belongs to the cytidylyltransferase family. Homodimer.

The catalysed reaction is D-glycero-beta-D-manno-heptose 7-phosphate + ATP = D-glycero-beta-D-manno-heptose 1,7-bisphosphate + ADP + H(+). It catalyses the reaction D-glycero-beta-D-manno-heptose 1-phosphate + ATP + H(+) = ADP-D-glycero-beta-D-manno-heptose + diphosphate. The protein operates within nucleotide-sugar biosynthesis; ADP-L-glycero-beta-D-manno-heptose biosynthesis; ADP-L-glycero-beta-D-manno-heptose from D-glycero-beta-D-manno-heptose 7-phosphate: step 1/4. It functions in the pathway nucleotide-sugar biosynthesis; ADP-L-glycero-beta-D-manno-heptose biosynthesis; ADP-L-glycero-beta-D-manno-heptose from D-glycero-beta-D-manno-heptose 7-phosphate: step 3/4. Its pathway is bacterial outer membrane biogenesis; LPS core biosynthesis. Its function is as follows. Catalyzes the phosphorylation of D-glycero-D-manno-heptose 7-phosphate at the C-1 position to selectively form D-glycero-beta-D-manno-heptose-1,7-bisphosphate. Functionally, catalyzes the ADP transfer from ATP to D-glycero-beta-D-manno-heptose 1-phosphate, yielding ADP-D-glycero-beta-D-manno-heptose. This chain is Bifunctional protein HldE (hldE), found in Actinobacillus pleuropneumoniae (Haemophilus pleuropneumoniae).